The chain runs to 201 residues: Kinetochore protein SPC24 homolog (201 aa).

Positions 78-133 (DIAAEDEIERLQKELDEEMEREFKLKDELRLVADELKDLNAQLSSIDEHKQSTKRK) form a coiled coil.

The protein belongs to the SPC24 family. As to quaternary structure, component of the NDC80 complex, which consists of NDC80, NUF2, SPC24 and SPC25. As to expression, highly expressed in actively dividing tissues, such as shoot apical meristem (SAM), root apical meristem (RAM), vasculature, newly emerging leaves and inflorescence shoots.

It localises to the chromosome. Its subcellular location is the centromere. In terms of biological role, acts as a component of the essential kinetochore-associated NDC80 complex, which is required for chromosome segregation and spindle checkpoint activity to ensure proper cell division. Required for the maintenance of plant architecture. The polypeptide is Kinetochore protein SPC24 homolog (Arabidopsis thaliana (Mouse-ear cress)).